We begin with the raw amino-acid sequence, 579 residues long: Arginine--tRNA ligase (579 aa).

Positions 127–137 match the 'HIGH' region motif; it reads ANPTGPLHVGH.

This sequence belongs to the class-I aminoacyl-tRNA synthetase family. In terms of assembly, monomer.

It localises to the cytoplasm. It catalyses the reaction tRNA(Arg) + L-arginine + ATP = L-arginyl-tRNA(Arg) + AMP + diphosphate. The sequence is that of Arginine--tRNA ligase from Acidithiobacillus ferrooxidans (strain ATCC 23270 / DSM 14882 / CIP 104768 / NCIMB 8455) (Ferrobacillus ferrooxidans (strain ATCC 23270)).